Reading from the N-terminus, the 380-residue chain is Cytochrome b (380 aa).

4 helical membrane passes run 33–53, 77–98, 113–133, and 178–198; these read FGSL…FLAM, WLIR…YLHV, WNIG…GYVL, and FFAF…LHLL. Positions 83 and 97 each coordinate heme b. Residues histidine 182 and histidine 196 each coordinate heme b. Histidine 201 provides a ligand contact to a ubiquinone. 4 helical membrane passes run 226 to 246, 288 to 308, 320 to 340, and 347 to 367; these read YKDL…ALFS, LGGV…PLLH, LTQI…WIGG, and FITV…IFIP.

Belongs to the cytochrome b family. As to quaternary structure, the cytochrome bc1 complex contains 3 respiratory subunits (MT-CYB, CYC1 and UQCRFS1), 2 core proteins (UQCRC1 and UQCRC2) and probably 6 low-molecular weight proteins. Heme b is required as a cofactor.

The protein resides in the mitochondrion inner membrane. Functionally, component of the ubiquinol-cytochrome c reductase complex (complex III or cytochrome b-c1 complex) that is part of the mitochondrial respiratory chain. The b-c1 complex mediates electron transfer from ubiquinol to cytochrome c. Contributes to the generation of a proton gradient across the mitochondrial membrane that is then used for ATP synthesis. This chain is Cytochrome b (mt-cyb), found in Neocyttus rhomboidalis (Spiky oreo dory).